Consider the following 347-residue polypeptide: CRISPR-associated endonuclease Cas1 4 (347 aa).

Over residues 1-21 the composition is skewed to basic and acidic residues; that stretch reads MNIENEVHIENASESKREPKP. A disordered region spans residues 1-25; that stretch reads MNIENEVHIENASESKREPKPPEGL. Mn(2+) is bound by residues Glu-176, His-241, and Glu-256.

It belongs to the CRISPR-associated endonuclease Cas1 family. As to quaternary structure, homodimer, forms a heterotetramer with a Cas2 homodimer. Mg(2+) is required as a cofactor. Requires Mn(2+) as cofactor.

CRISPR (clustered regularly interspaced short palindromic repeat), is an adaptive immune system that provides protection against mobile genetic elements (viruses, transposable elements and conjugative plasmids). CRISPR clusters contain spacers, sequences complementary to antecedent mobile elements, and target invading nucleic acids. CRISPR clusters are transcribed and processed into CRISPR RNA (crRNA). Acts as a dsDNA endonuclease. Involved in the integration of spacer DNA into the CRISPR cassette. This Methanospirillum hungatei JF-1 (strain ATCC 27890 / DSM 864 / NBRC 100397 / JF-1) protein is CRISPR-associated endonuclease Cas1 4.